We begin with the raw amino-acid sequence, 100 residues long: NADH-quinone oxidoreductase subunit K (100 aa).

Helical transmembrane passes span leucine 4–isoleucine 24, leucine 28–valine 48, and valine 60–leucine 80.

This sequence belongs to the complex I subunit 4L family. As to quaternary structure, NDH-1 is composed of 13 different subunits. Subunits NuoA, H, J, K, L, M, N constitute the membrane sector of the complex.

The protein localises to the cell inner membrane. The enzyme catalyses a quinone + NADH + 5 H(+)(in) = a quinol + NAD(+) + 4 H(+)(out). Functionally, NDH-1 shuttles electrons from NADH, via FMN and iron-sulfur (Fe-S) centers, to quinones in the respiratory chain. The immediate electron acceptor for the enzyme in this species is believed to be ubiquinone. Couples the redox reaction to proton translocation (for every two electrons transferred, four hydrogen ions are translocated across the cytoplasmic membrane), and thus conserves the redox energy in a proton gradient. This is NADH-quinone oxidoreductase subunit K from Yersinia pseudotuberculosis serotype O:1b (strain IP 31758).